We begin with the raw amino-acid sequence, 458 residues long: MPN domain-containing protein (458 aa).

The disordered stretch occupies residues 1-37 (MGSEPPSSPQVVEEGADEEDEELSGAEDADLRSSSGR). The segment covering 14–28 (EGADEEDEELSGAED) has biased composition (acidic residues). Residues 42–137 (TRRGITLRVL…QYKTTWLHKY (96 aa)) enclose the RAMA domain. Residues Ser94, Ser96, and Trp116 each coordinate DNA. Residues 147–175 (SEGEDDEMGDDDEEEGKTTIPVEDKNKKS) are disordered. The span at 148–161 (EGEDDEMGDDDEEE) shows a compositional bias: acidic residues. The MPN domain maps to 229-364 (VAVSSNVLLL…VASTITPFWV (136 aa)). Zn(2+) contacts are provided by His306, His308, and Asp319. Residues 306-319 (HSHPRGPALPSLQD) carry the JAMM motif motif.

The protein belongs to the peptidase M67 family. Post-translationally, degraded following binding to N(6)-methyladenosine methylated DNA (m6A).

Functionally, probable protease. Acts as a sensor of N(6)-methyladenosine methylation on DNA (m6A): recognizes and binds m6A DNA, leading to its degradation. Binds only double strand DNA (dsDNA) in a sequence-independent manner. The sequence is that of MPN domain-containing protein from Danio rerio (Zebrafish).